We begin with the raw amino-acid sequence, 102 residues long: Aspartyl/glutamyl-tRNA(Asn/Gln) amidotransferase subunit C (102 aa).

Belongs to the GatC family. Heterotrimer of A, B and C subunits.

The catalysed reaction is L-glutamyl-tRNA(Gln) + L-glutamine + ATP + H2O = L-glutaminyl-tRNA(Gln) + L-glutamate + ADP + phosphate + H(+). It catalyses the reaction L-aspartyl-tRNA(Asn) + L-glutamine + ATP + H2O = L-asparaginyl-tRNA(Asn) + L-glutamate + ADP + phosphate + 2 H(+). In terms of biological role, allows the formation of correctly charged Asn-tRNA(Asn) or Gln-tRNA(Gln) through the transamidation of misacylated Asp-tRNA(Asn) or Glu-tRNA(Gln) in organisms which lack either or both of asparaginyl-tRNA or glutaminyl-tRNA synthetases. The reaction takes place in the presence of glutamine and ATP through an activated phospho-Asp-tRNA(Asn) or phospho-Glu-tRNA(Gln). This Bordetella bronchiseptica (strain ATCC BAA-588 / NCTC 13252 / RB50) (Alcaligenes bronchisepticus) protein is Aspartyl/glutamyl-tRNA(Asn/Gln) amidotransferase subunit C.